We begin with the raw amino-acid sequence, 1338 residues long: Protein dispatched homolog 3 (1338 aa).

The Cytoplasmic portion of the chain corresponds to 1 to 67; sequence MDTEDDPLLQ…VGWIFTNPYC (67 aa). A helical transmembrane segment spans residues 68–88; sequence AGFILFLGCAIPAVLAVVMFL. The Lumenal portion of the chain corresponds to 89 to 406; sequence HYPALDIDIS…YEVRRTFNND (318 aa). The interval 164–196 is disordered; it reads TRAKRSAPQGRTSSPEPRAHPHPGNETSRVTRG. In terms of domain architecture, SSD spans 401-559; sequence RTFNNDMLLA…LFTMPAALGI (159 aa). The helical transmembrane segment at 407–427 threads the bilayer; the sequence is MLLAFISSSCIAVLVYILTSC. A topological domain (cytoplasmic) is located at residue Ser-428. The chain crosses the membrane as a helical span at residues 429–449; sequence VFLSFFGIASIGLSCLVALFL. Topologically, residues 450-452 are lumenal; the sequence is YHV. A helical transmembrane segment spans residues 453–473; the sequence is VFGIQYLGILNGVAAFVIVGI. Over 474–517 the chain is Cytoplasmic; that stretch reads GVDDVFVFINTYRQATHLKDLRLRMIHTIQTAGKATFFTSLTTA. Residues 518–538 traverse the membrane as a helical segment; sequence AAYAANIFSQIPAVHDFGLFM. A topological domain (lumenal) is located at residue Ser-539. Residues 540–560 traverse the membrane as a helical segment; that stretch reads LIVSCCWVAVLFTMPAALGIW. The Cytoplasmic segment spans residues 561 to 672; that stretch reads TLYVSPLESS…WVLWSAVKSR (112 aa). The helical transmembrane segment at 673 to 693 threads the bilayer; sequence WVIVGLFLLVLLLSIFFASRL. Residues 694–1128 lie on the Lumenal side of the membrane; sequence RPASRAPVLF…IFMEIIGVQS (435 aa). Positions 747–768 are disordered; the sequence is SLEKKKRGSASPWGSKGSISDT. Residues 1129 to 1149 form a helical membrane-spanning segment; that stretch reads ALYGLILSLVICVAAVAVFTT. His-1150 is a topological domain (cytoplasmic). The chain crosses the membrane as a helical span at residues 1151–1171; the sequence is ILLLLPVLLSILGVVCLVVTI. Topologically, residues 1172–1237 are lumenal; the sequence is MYWSGWEMGA…TIEAIRHVGV (66 aa). The helical transmembrane segment at 1238 to 1258 threads the bilayer; sequence AIVSSAVTTVIATVPLFFCII. Residues 1259–1266 are Cytoplasmic-facing; it reads APFAKFGK. The chain crosses the membrane as a helical span at residues 1267–1287; the sequence is IVALNTGVSILYTLTVSTALL. Topologically, residues 1288-1302 are lumenal; that stretch reads SIMGPGTFTRSRTSC. The chain crosses the membrane as a helical span at residues 1303–1323; that stretch reads LKAVAGVLLAGLLGLCICLAL. At 1324–1338 the chain is on the cytoplasmic side; it reads LKGGFKIPLPNGTAL.

Belongs to the patched family. Expressed in retina, hippocampus and cerebellum. Expressed in the ganglion and bipolar cells of the inner and outer nuclear layers of the retina and in Purkinje cells (at protein level). Expressed strongly in brain and retina, weakly in testis and bone marrow.

The protein resides in the endoplasmic reticulum membrane. The protein localises to the nucleus membrane. It localises to the cytoplasmic vesicle membrane. Its function is as follows. Plays a role in neuronal proliferation and differentiation. Plays a role in the accumulation of cellular cholesterol. Involved in intracellular lipid droplet formation. May contribute to cholesterol homeostasis in neuronal cells. This is Protein dispatched homolog 3 from Gallus gallus (Chicken).